Consider the following 178-residue polypeptide: Large ribosomal subunit protein uL6 (178 aa).

This sequence belongs to the universal ribosomal protein uL6 family. In terms of assembly, part of the 50S ribosomal subunit.

This protein binds to the 23S rRNA, and is important in its secondary structure. It is located near the subunit interface in the base of the L7/L12 stalk, and near the tRNA binding site of the peptidyltransferase center. The protein is Large ribosomal subunit protein uL6 of Ligilactobacillus salivarius (strain UCC118) (Lactobacillus salivarius).